A 219-amino-acid polypeptide reads, in one-letter code: Probable lipoprotein YiaD (219 aa).

The signal sequence occupies residues 1–20; it reads MKKRVYLIAAVVSGALAVSG. Cys-21 carries the N-palmitoyl cysteine lipid modification. Cys-21 carries the S-diacylglycerol cysteine lipid modification. A run of 2 helical transmembrane segments spans residues 37–55 and 62–84; these read IGAGLGSLVGAGIGALSSS and GALIGAAAGAALGGGVGYYMDVQ. An OmpA-like domain is found at 103 to 219; it reads GDNIILNMPN…RRVEITLSPL (117 aa).

The protein resides in the cell inner membrane. The protein localises to the cell outer membrane. In terms of biological role, suppresses temperature-sensitive mutations in BamB when overexpressed. This chain is Probable lipoprotein YiaD (yiaD), found in Escherichia coli (strain K12).